Reading from the N-terminus, the 460-residue chain is G2/mitotic-specific cyclin-4 (460 aa).

This sequence belongs to the cyclin family. Cyclin AB subfamily.

Essential for the control of the cell cycle at the G2/M (mitosis) transition. Interacts with the CDC2 protein kinase to form MPF. G2/M cyclins accumulate steadily during G2 and are abruptly destroyed at mitosis. In Saccharomyces cerevisiae (strain ATCC 204508 / S288c) (Baker's yeast), this protein is G2/mitotic-specific cyclin-4 (CLB4).